A 248-amino-acid polypeptide reads, in one-letter code: Protein-lysine N-methyltransferase EFM5 (248 aa).

This sequence belongs to the class I-like SAM-binding methyltransferase superfamily. EFM5 family.

It localises to the cytoplasm. In terms of biological role, S-adenosyl-L-methionine-dependent protein-lysine N-methyltransferase that trimethylates elongation factor 1-alpha (TEF1 and TEF2) at 'Lys-79'. Required for replication of Brome mosaic virus (BMV). The chain is Protein-lysine N-methyltransferase EFM5 from Saccharomyces cerevisiae (strain ATCC 204508 / S288c) (Baker's yeast).